Reading from the N-terminus, the 184-residue chain is Photosystem I assembly protein Ycf4 (184 aa).

Helical transmembrane passes span 19–39 (ISNL…FLVG) and 57–77 (IIFF…LFIS).

Belongs to the Ycf4 family.

It is found in the plastid thylakoid membrane. Functionally, seems to be required for the assembly of the photosystem I complex. The polypeptide is Photosystem I assembly protein Ycf4 (Cuscuta exaltata (Tall dodder)).